The chain runs to 517 residues: Bifunctional purine biosynthesis protein PurH (517 aa).

Positions 1–145 constitute an MGS-like domain; sequence MSPLALVSVS…KNHKDVSVLV (145 aa).

Belongs to the PurH family.

It catalyses the reaction (6R)-10-formyltetrahydrofolate + 5-amino-1-(5-phospho-beta-D-ribosyl)imidazole-4-carboxamide = 5-formamido-1-(5-phospho-D-ribosyl)imidazole-4-carboxamide + (6S)-5,6,7,8-tetrahydrofolate. It carries out the reaction IMP + H2O = 5-formamido-1-(5-phospho-D-ribosyl)imidazole-4-carboxamide. It participates in purine metabolism; IMP biosynthesis via de novo pathway; 5-formamido-1-(5-phospho-D-ribosyl)imidazole-4-carboxamide from 5-amino-1-(5-phospho-D-ribosyl)imidazole-4-carboxamide (10-formyl THF route): step 1/1. Its pathway is purine metabolism; IMP biosynthesis via de novo pathway; IMP from 5-formamido-1-(5-phospho-D-ribosyl)imidazole-4-carboxamide: step 1/1. The protein is Bifunctional purine biosynthesis protein PurH of Prochlorococcus marinus (strain AS9601).